Consider the following 455-residue polypeptide: Bleomycin hydrolase (455 aa).

Position 1 is an N-acetylmethionine (Met1). Residues Cys73 and His372 contribute to the active site. Residue Lys391 is modified to N6-acetyllysine. Asn396 is a catalytic residue.

This sequence belongs to the peptidase C1 family. As to quaternary structure, homohexamer. Interacts with NUDT12 (via ANK repeats).

Its subcellular location is the cytoplasm. The protein localises to the cytoplasmic granule. It carries out the reaction Inactivates bleomycin B2 (a cytotoxic glycometallopeptide) by hydrolysis of a carboxyamide bond of beta-aminoalanine, but also shows general aminopeptidase activity. The specificity varies somewhat with source, but amino acid arylamides of Met, Leu and Ala are preferred.. The normal physiological role of BLM hydrolase is unknown, but it catalyzes the inactivation of the antitumor drug BLM (a glycopeptide) by hydrolyzing the carboxamide bond of its B-aminoalaninamide moiety thus protecting normal and malignant cells from BLM toxicity. The sequence is that of Bleomycin hydrolase (BLMH) from Homo sapiens (Human).